Consider the following 320-residue polypeptide: Cytochrome f (320 aa).

The signal sequence occupies residues Met-1–Ala-35. Heme is bound by residues Tyr-36, Cys-56, Cys-59, and His-60. Residues Val-286–Lys-306 traverse the membrane as a helical segment.

Belongs to the cytochrome f family. The 4 large subunits of the cytochrome b6-f complex are cytochrome b6, subunit IV (17 kDa polypeptide, petD), cytochrome f and the Rieske protein, while the 4 small subunits are PetG, PetL, PetM and PetN. The complex functions as a dimer. Heme is required as a cofactor.

It is found in the plastid. Its subcellular location is the chloroplast thylakoid membrane. Functionally, component of the cytochrome b6-f complex, which mediates electron transfer between photosystem II (PSII) and photosystem I (PSI), cyclic electron flow around PSI, and state transitions. The chain is Cytochrome f from Gossypium barbadense (Sea Island cotton).